The primary structure comprises 334 residues: MSKNNKKKRRWDLKNGGILLEELIASFDGKTNPIRCFSSDQILKATDNFSESRIISSWGYFIWYKGVIEERQVSIKKWSSQNLSSFTEAYRDISVSSQMSGHKNALKLIGCCLEFDLPALVCEYTEHGPLNRDGGLSSGVVLPWKVRLKIAKEIASSVTYLHTAFPETIVHRNINPTNIFIDENWTAKLSDFWFCVAIPEGELYVEDDVKGVIGFVDPDYYWTMKVTEKVDIYSFGVVMLVLLSGRAAVFNGPDEAPMSLNDHVSEVMEKGEFDEIVDKEIWNDLGGDDDLVLRRSQVKAFLRLALRCVRYKKEDPVSGMLEVAKELKLIEKLS.

The Protein kinase domain maps to 49-334; that stretch reads FSESRIISSW…KELKLIEKLS (286 aa). ATP-binding positions include 55–63 and lysine 76; that span reads ISSWGYFIW. O-acetylthreonine occurs at positions 125 and 177.

Belongs to the protein kinase superfamily. Ser/Thr protein kinase family. ZRK subfamily. In terms of assembly, interacts with RPP13L4/ZAR1. Component of an immune signaling complex made of, at least, SZE1, BKN2/SZE2, ZAR1 and ZED1. Binds directly to SZE1 at the plasma membrane. Expressed in seedlings, young leaves, floral organs, shoot apical meristems (SAM) and inflorescence stems.

The protein localises to the cytoplasm. Its subcellular location is the cytosol. The protein resides in the nucleus. It is found in the cell membrane. Its function is as follows. Together with RPP13L4/ZAR1, involved in the ambient temperature (above 22 degrees Celsius)-sensitive aerial organ development. Together with RPP13L4/ZAR1, involved in the regulation of the ambient temperature-sensitive intersection of growth and immune response in the absence of pathogens, by repressing the transcription of SNC1. Probable non-functional kinase required for recognition of the Pseudomonas syringae type III effector HopZ1a by RPP13L4/ZAR1 and, together with SZE1 and SZE2, to trigger subsequent defense responses. May function as a decoy to trap HopZ1a in the ZAR1 complex for recognition by the plant immune system. In Arabidopsis thaliana (Mouse-ear cress), this protein is Non-functional pseudokinase ZED1.